Reading from the N-terminus, the 197-residue chain is Allatostatins (197 aa).

Positions 1-27 are cleaved as a signal peptide; that stretch reads MRSRTSVLTSSLAFLYFFGIVGRSALA. A propeptide spanning residues 28-56 is cleaved from the precursor; sequence MEETPASSMNLQHYNNMLNPMVFDDTMPE. Ile76 carries the isoleucine amide modification. A propeptide spanning residues 80-86 is cleaved from the precursor; sequence WIDTNDN. Leucine amide is present on residues Leu96, Leu106, Leu154, and Leu184. Residues 161-197 are disordered; the sequence is YSGGQPLGSKRPNDMLSQRYHFGLGKRMSEDEEESSQ. Residues 188–197 constitute a propeptide that is removed on maturation; the sequence is MSEDEEESSQ.

The protein belongs to the allatostatin family.

Its subcellular location is the secreted. Neuropeptides. The sequence is that of Allatostatins from Apis mellifera (Honeybee).